The primary structure comprises 346 residues: Sensor histidine kinase GraS (346 aa).

The next 2 membrane-spanning stretches (helical) occupy residues 15 to 35 (MNWI…SLID) and 43 to 63 (LFYI…LTYF). Residues 126–332 (EFVHDIKTPV…TVRLIFPLQN (207 aa)) form the Histidine kinase domain.

As to quaternary structure, interacts with GraX.

The protein localises to the cell membrane. The catalysed reaction is ATP + protein L-histidine = ADP + protein N-phospho-L-histidine.. Functionally, member of the two-component regulatory system GraR/GraS involved in resistance against cationic antimicrobial peptides (CAMPs). Functions as a sensor protein kinase which phosphorylates GraR through the auxiliary protein GraX. In turn, GraR up-regulates many genes such as adhesins, exoproteins, transporters, toxins, and proteins involved in cell wall synthesis. Down-regulates the expression of many genes involved in RNA and amino acid synthesis or glycolysis. The protein is Sensor histidine kinase GraS (graS) of Staphylococcus aureus (strain COL).